A 612-amino-acid polypeptide reads, in one-letter code: Alpha-glycerophosphate oxidase (612 aa).

21–49 (DLLIIGGGITGAGVALQAAASGLDTGLIE) contacts FAD. Basic and acidic residues predominate over residues 399-408 (ETSTSEKELD). A disordered region spans residues 399-418 (ETSTSEKELDPSAVSRGSSF).

It belongs to the FAD-dependent glycerol-3-phosphate dehydrogenase family. It depends on FAD as a cofactor.

The protein localises to the cytoplasm. It carries out the reaction sn-glycerol 3-phosphate + O2 = dihydroxyacetone phosphate + H2O2. The protein is Alpha-glycerophosphate oxidase (glpO) of Streptococcus pyogenes serotype M1.